A 384-amino-acid chain; its full sequence is S-adenosylmethionine synthase (384 aa).

H15 contacts ATP. D17 is a Mg(2+) binding site. K(+) is bound at residue E43. L-methionine is bound by residues E56 and Q99. The segment at 99–109 (QSPDINQGVDR) is flexible loop. Residues 164 to 166 (DAK), 230 to 231 (RF), D239, 245 to 246 (RK), A262, and K266 each bind ATP. Residue D239 participates in L-methionine binding. K270 serves as a coordination point for L-methionine.

The protein belongs to the AdoMet synthase family. Homotetramer; dimer of dimers. The cofactor is Mg(2+). K(+) is required as a cofactor.

The protein resides in the cytoplasm. The catalysed reaction is L-methionine + ATP + H2O = S-adenosyl-L-methionine + phosphate + diphosphate. Its pathway is amino-acid biosynthesis; S-adenosyl-L-methionine biosynthesis; S-adenosyl-L-methionine from L-methionine: step 1/1. Functionally, catalyzes the formation of S-adenosylmethionine (AdoMet) from methionine and ATP. The overall synthetic reaction is composed of two sequential steps, AdoMet formation and the subsequent tripolyphosphate hydrolysis which occurs prior to release of AdoMet from the enzyme. The polypeptide is S-adenosylmethionine synthase (Escherichia fergusonii (strain ATCC 35469 / DSM 13698 / CCUG 18766 / IAM 14443 / JCM 21226 / LMG 7866 / NBRC 102419 / NCTC 12128 / CDC 0568-73)).